The following is a 99-amino-acid chain: Large ribosomal subunit protein uL23 (99 aa).

This sequence belongs to the universal ribosomal protein uL23 family. Part of the 50S ribosomal subunit. Contacts protein L29, and trigger factor when it is bound to the ribosome.

In terms of biological role, one of the early assembly proteins it binds 23S rRNA. One of the proteins that surrounds the polypeptide exit tunnel on the outside of the ribosome. Forms the main docking site for trigger factor binding to the ribosome. The chain is Large ribosomal subunit protein uL23 from Alkalilimnicola ehrlichii (strain ATCC BAA-1101 / DSM 17681 / MLHE-1).